Consider the following 119-residue polypeptide: DNA-binding protein inhibitor ID-3 (119 aa).

Positions 28–80 constitute a bHLH domain; sequence RGKGPAAEEPLSLLDDMNHCYSRLRELVPGVPRGTQLSQVEILQRVIDYILDL.

In terms of assembly, homodimer, and heterodimer with other HLH proteins. Interacts with COPS5 and COPS7A. Interacts with IFI204. Interacts with GATA4 and NKX2-5. Interacts with ANKRD2; both proteins cooperate in myoblast differentiation. Interacts with CLOCK and BMAL1.

It localises to the nucleus. Its function is as follows. Transcriptional regulator (lacking a basic DNA binding domain) which negatively regulates the basic helix-loop-helix (bHLH) transcription factors by forming heterodimers and inhibiting their DNA binding and transcriptional activity. Implicated in regulating a variety of cellular processes, including cellular growth, senescence, differentiation, apoptosis, angiogenesis, and neoplastic transformation. Involved in myogenesis by inhibiting skeletal muscle and cardiac myocyte differentiation and promoting muscle precursor cells proliferation. Inhibits the binding of E2A-containing protein complexes to muscle creatine kinase E-box enhancer. Regulates the circadian clock by repressing the transcriptional activator activity of the CLOCK-BMAL1 heterodimer. The chain is DNA-binding protein inhibitor ID-3 (ID3) from Canis lupus familiaris (Dog).